The chain runs to 139 residues: Gastrula zinc finger protein XlCGF29.1 (139 aa).

5 consecutive C2H2-type zinc fingers follow at residues 6–28 (FTCT…LLIH), 34–56 (FDST…LSTH), 62–84 (FVCT…LHSH), 90–112 (FPCS…LRHH), and 117–139 (FPCT…QMIH).

This sequence belongs to the krueppel C2H2-type zinc-finger protein family.

The protein resides in the nucleus. In terms of biological role, may be involved in transcriptional regulation. The polypeptide is Gastrula zinc finger protein XlCGF29.1 (Xenopus laevis (African clawed frog)).